We begin with the raw amino-acid sequence, 416 residues long: Tryptophan synthase beta chain (416 aa).

Lys-109 carries the post-translational modification N6-(pyridoxal phosphate)lysine.

It belongs to the TrpB family. In terms of assembly, tetramer of two alpha and two beta chains. The cofactor is pyridoxal 5'-phosphate.

It carries out the reaction (1S,2R)-1-C-(indol-3-yl)glycerol 3-phosphate + L-serine = D-glyceraldehyde 3-phosphate + L-tryptophan + H2O. Its pathway is amino-acid biosynthesis; L-tryptophan biosynthesis; L-tryptophan from chorismate: step 5/5. In terms of biological role, the beta subunit is responsible for the synthesis of L-tryptophan from indole and L-serine. In Prochlorococcus marinus (strain SARG / CCMP1375 / SS120), this protein is Tryptophan synthase beta chain.